Here is a 380-residue protein sequence, read N- to C-terminus: Histidinol-phosphate aminotransferase (380 aa).

The residue at position 235 (K235) is an N6-(pyridoxal phosphate)lysine.

This sequence belongs to the class-II pyridoxal-phosphate-dependent aminotransferase family. Histidinol-phosphate aminotransferase subfamily. As to quaternary structure, homodimer. Pyridoxal 5'-phosphate serves as cofactor.

The catalysed reaction is L-histidinol phosphate + 2-oxoglutarate = 3-(imidazol-4-yl)-2-oxopropyl phosphate + L-glutamate. Its pathway is amino-acid biosynthesis; L-histidine biosynthesis; L-histidine from 5-phospho-alpha-D-ribose 1-diphosphate: step 7/9. The chain is Histidinol-phosphate aminotransferase from Rhodococcus jostii (strain RHA1).